A 192-amino-acid polypeptide reads, in one-letter code: MATKIRLQRHGRKGYAFYKIVVADSRAPRDGKFIERIGSYNPNTNPATIDLNFERALYWIGVGAQPTDTARNILSREGVLMMKHLLGGVKKGAFDQAAAESKFEAWLKGKKDALNNMKAKVKEAAVADDKVKLEAEKAVNKARAEAVAEKKAAEAKAKAEAEAAAAAEEATETEETPMEAAAEEAPAAESAE.

Over residues 149–161 (EKKAAEAKAKAEA) the composition is skewed to basic and acidic residues. The disordered stretch occupies residues 149–192 (EKKAAEAKAKAEAEAAAAAEEATETEETPMEAAAEEAPAAESAE). The span at 178 to 192 (MEAAAEEAPAAESAE) shows a compositional bias: low complexity.

It belongs to the bacterial ribosomal protein bS16 family.

This Porphyromonas gingivalis (strain ATCC 33277 / DSM 20709 / CIP 103683 / JCM 12257 / NCTC 11834 / 2561) protein is Small ribosomal subunit protein bS16.